A 357-amino-acid chain; its full sequence is MNKPSIYGLTLEQMTEWLSHQGHKPFRAKQVWDWLYRKRVTTFAEMTNVNKDCLELLDQSFAIDSMTQAVKQESADGTIKFLFKLYDGSLIETVLMRHKYGLSVCVTTQVGCNIGCSFCASGLIKKSRDLSAGEIVEQIMNVQHHLDAVGKEERVSHVVVMGIGEPFDNFDNMVDFLNVIKDHNGLAIGARHITVSTSGLADKIYKFADLKLQVNLAISLHAPNNELRTQIMKINRAIPLEKLMPAIDYYVKTTNRKITIEYILLRGVNDQKAQAIELAKLFEDKRHLTYVNLIPYNPVDEHGQYQRSTSEDISTFYDTLKKNGLNCGVRLEHGTDIDAACGQLRSKQIKKDTVAAK.

Residue Glu-92 is the Proton acceptor of the active site. Residues 98–336 (HKYGLSVCVT…CGVRLEHGTD (239 aa)) enclose the Radical SAM core domain. Cysteines 105 and 341 form a disulfide. Residues Cys-112, Cys-116, and Cys-119 each coordinate [4Fe-4S] cluster. S-adenosyl-L-methionine is bound by residues 164–165 (GE), Ser-196, 219–221 (SLH), and Asn-297. Cys-341 serves as the catalytic S-methylcysteine intermediate.

This sequence belongs to the radical SAM superfamily. RlmN family. [4Fe-4S] cluster is required as a cofactor.

The protein localises to the cytoplasm. The catalysed reaction is adenosine(2503) in 23S rRNA + 2 reduced [2Fe-2S]-[ferredoxin] + 2 S-adenosyl-L-methionine = 2-methyladenosine(2503) in 23S rRNA + 5'-deoxyadenosine + L-methionine + 2 oxidized [2Fe-2S]-[ferredoxin] + S-adenosyl-L-homocysteine. It catalyses the reaction adenosine(37) in tRNA + 2 reduced [2Fe-2S]-[ferredoxin] + 2 S-adenosyl-L-methionine = 2-methyladenosine(37) in tRNA + 5'-deoxyadenosine + L-methionine + 2 oxidized [2Fe-2S]-[ferredoxin] + S-adenosyl-L-homocysteine. Functionally, specifically methylates position 2 of adenine 2503 in 23S rRNA and position 2 of adenine 37 in tRNAs. This Exiguobacterium sibiricum (strain DSM 17290 / CCUG 55495 / CIP 109462 / JCM 13490 / 255-15) protein is Probable dual-specificity RNA methyltransferase RlmN.